A 205-amino-acid polypeptide reads, in one-letter code: tRNA (guanine-N(7)-)-methyltransferase (205 aa).

Residues Glu-34, Glu-59, Asp-86, and Asp-107 each coordinate S-adenosyl-L-methionine. Asp-107 is a catalytic residue. Residue Lys-111 participates in substrate binding. The interval 113–118 (RHEKRR) is interaction with RNA. Substrate-binding positions include Asp-144 and 182-185 (TGYE).

The protein belongs to the class I-like SAM-binding methyltransferase superfamily. TrmB family.

The enzyme catalyses guanosine(46) in tRNA + S-adenosyl-L-methionine = N(7)-methylguanosine(46) in tRNA + S-adenosyl-L-homocysteine. The protein operates within tRNA modification; N(7)-methylguanine-tRNA biosynthesis. Its function is as follows. Catalyzes the formation of N(7)-methylguanine at position 46 (m7G46) in tRNA. This chain is tRNA (guanine-N(7)-)-methyltransferase, found in Mycoplasmopsis synoviae (strain 53) (Mycoplasma synoviae).